The sequence spans 490 residues: UDP-N-acetylmuramate--L-alanine ligase (490 aa).

ATP is bound at residue 130-136 (GTHGKTT).

It belongs to the MurCDEF family.

It is found in the cytoplasm. It carries out the reaction UDP-N-acetyl-alpha-D-muramate + L-alanine + ATP = UDP-N-acetyl-alpha-D-muramoyl-L-alanine + ADP + phosphate + H(+). The protein operates within cell wall biogenesis; peptidoglycan biosynthesis. In terms of biological role, cell wall formation. The chain is UDP-N-acetylmuramate--L-alanine ligase from Idiomarina loihiensis (strain ATCC BAA-735 / DSM 15497 / L2-TR).